Reading from the N-terminus, the 319-residue chain is Plasmodesmata-located protein 4 (319 aa).

A signal peptide spans methionine 1 to threonine 26. Residues serine 27–serine 288 are Extracellular-facing. Intrachain disulfides connect cysteine 39–cysteine 127, cysteine 103–cysteine 112, cysteine 115–cysteine 140, cysteine 177–cysteine 247, cysteine 223–cysteine 232, and cysteine 235–cysteine 260. Gnk2-homologous domains are found at residues asparagine 45–isoleucine 149 and histidine 170–histidine 269. A helical transmembrane segment spans residues leucine 289–leucine 309. A necessary and sufficient for plasmodesmal targeting region spans residues leucine 289–leucine 309. The Cytoplasmic segment spans residues lysine 310 to cysteine 319.

Belongs to the cysteine-rich repeat secretory protein family. Plasmodesmata-located proteins (PDLD) subfamily. (Microbial infection) Interacts with Grapevine fanleaf virus (GFLV) 2B-MP. In terms of tissue distribution, highly expressed in seeds and roots.

It is found in the cell membrane. The protein localises to the cell junction. The protein resides in the plasmodesma. Modulates cell-to-cell trafficking. The sequence is that of Plasmodesmata-located protein 4 from Arabidopsis thaliana (Mouse-ear cress).